The chain runs to 455 residues: MGKLFGTDGVRGIVNKELTPELVLKLSKAIGTFFGKNSKILVGRDVRAGGDMLVKIVEGGLLSVGVEVYDGGMAPTPALQYAVKTLGYDGGVVITASHNPAPYNGIKVVDKDGIEIRREKENEIEDLFFTERFNTIEWSSLTTEVKREDRVISTYVNGILSHVDIEKIKKKNYKVLIDPANSVGALSTPLVARALGCKIYTINGNLDPLFSARQPEPTFDSLKETAEVVKTLKVDLGVAHDGDADRAIFIDSEGRVQWGDRSGTLLSYWASVKNPKAIKKIVTAVSSSSLVEEYLSKYNIQVDWTKVGSVDIAHKVADENALAGFEENGGFMYPPHQYVRDGAMSFALMLELLANENVSSAELFDRLPKYYLVKTKVDLKPGLMVEEIYKKILEVYSTSSVKAITIDGVKIIGKDFWFLVRKSGTEPIIRIMAEAKDENVANNLVNELKKIVEGK.

Residue Ser-97 is the Phosphoserine intermediate of the active site. 4 residues coordinate Mg(2+): Ser-97, Asp-241, Asp-243, and Asp-245. The residue at position 97 (Ser-97) is a Phosphoserine.

It belongs to the phosphohexose mutase family. It depends on Mg(2+) as a cofactor. Activated by phosphorylation.

It carries out the reaction alpha-D-glucosamine 1-phosphate = D-glucosamine 6-phosphate. The catalysed reaction is D-galactosamine 6-phosphate = alpha-D-galactosamine 1-phosphate. In terms of biological role, involved in the synthesis of UDP-N-acetylglucosamine (UDP-GlcNAc) and UDP-N-acetylgalactosamine (UDP-GalNAc). Catalyzes the conversion of glucosamine-6-phosphate to glucosamine-1-phosphate and of galactosamine-6-phosphate to galactosamine-1-phosphate. The protein is Phosphoglucosamine/phosphogalactosamine mutase of Sulfurisphaera tokodaii (strain DSM 16993 / JCM 10545 / NBRC 100140 / 7) (Sulfolobus tokodaii).